The following is a 647-amino-acid chain: Sialidase (647 aa).

An N-terminal signal peptide occupies residues 1 to 37 (MTANPYLRRLPRRRAVSFLLAPALAAATVAGASPAQA). Arginine 68 serves as a coordination point for substrate. Aspartate 92 functions as the Proton acceptor in the catalytic mechanism. BNR repeat units lie at residues 102–113 (RRSTDGGRTWGE), 175–186 (ATSTDGGLTWSH), and 239–250 (VYSDDHGRTWRA). Glutamate 260 serves as the catalytic Nucleophile. A substrate-binding site is contributed by arginine 276. 2 BNR repeats span residues 287–298 (AVSTDGGHSYGP) and 348–359 (RMSCDDGQTWPV). The active-site Nucleophile is the tyrosine 370. An F5/8 type C domain is found at 496–646 (TFTVTVGLLD…AVAELEVEGQ (151 aa)).

The protein belongs to the glycosyl hydrolase 33 family.

The protein resides in the secreted. It catalyses the reaction Hydrolysis of alpha-(2-&gt;3)-, alpha-(2-&gt;6)-, alpha-(2-&gt;8)- glycosidic linkages of terminal sialic acid residues in oligosaccharides, glycoproteins, glycolipids, colominic acid and synthetic substrates.. To release sialic acids for use as carbon and energy sources for this non-pathogenic bacterium while in pathogenic microorganisms, sialidases have been suggested to be pathogenic factors. The protein is Sialidase (nedA) of Micromonospora viridifaciens.